The primary structure comprises 306 residues: 2-phospho-L-lactate transferase (306 aa).

Positions 54 and 93 each coordinate 7,8-didemethyl-8-hydroxy-5-deazariboflavin.

This sequence belongs to the CofD family. As to quaternary structure, homodimer. Mg(2+) is required as a cofactor.

It catalyses the reaction (2S)-lactyl-2-diphospho-5'-guanosine + 7,8-didemethyl-8-hydroxy-5-deazariboflavin = oxidized coenzyme F420-0 + GMP + H(+). The protein operates within cofactor biosynthesis; coenzyme F420 biosynthesis. In terms of biological role, catalyzes the transfer of the 2-phospholactate moiety from (2S)-lactyl-2-diphospho-5'-guanosine to 7,8-didemethyl-8-hydroxy-5-deazariboflavin (FO) with the formation of oxidized coenzyme F420-0 and GMP. The chain is 2-phospho-L-lactate transferase from Methanothermobacter thermautotrophicus (strain ATCC 29096 / DSM 1053 / JCM 10044 / NBRC 100330 / Delta H) (Methanobacterium thermoautotrophicum).